Reading from the N-terminus, the 398-residue chain is MNKLVVKCGNFAVLVDLQVLPQGTSKDTSWFSDHEKEEVCTLVRDTLDSRVKEYLDSRRQPGQLKRKEYTQASPLILKGNRLRIAAYFIKRWVKLRCVVKRQYRELHVFPDRFVVCASQLEPASSVWVTEAAATLKESCSSGTSEYFAQPKGIEMTNLLTTPAQAVLKNIVRKTKITKDISDEAERDSRMSPSLGLADTGKADANNIQKALSKAQPEEKRAEEPNDYINTENSLGLPVPEVENDVNHRQPSEASSQQKPQCAELKTQDLSKHLSRLSDSAKQTQSLRASVMQQKRRRHSSEGKERCKKSCLTSDTFIQQGMQRNEAQVKDLEHVPLASQTDPVRHVSADRGDTLPSKPAAIISVASKQQQGALSLFSNIHTEQSVKAVLAPLLNKDLP.

The disordered stretch occupies residues 181–306; sequence SDEAERDSRM…RHSSEGKERC (126 aa). Polar residues predominate over residues 276–292; that stretch reads LSDSAKQTQSLRASVMQ.

It belongs to the SLX4IP family.

The sequence is that of Protein SLX4IP (slx4ip) from Xenopus tropicalis (Western clawed frog).